Consider the following 444-residue polypeptide: Tol-Pal system protein TolB (444 aa).

The N-terminal stretch at 1–19 is a signal peptide; sequence MRNIIYFILSLLFSVTSYA.

It belongs to the TolB family. In terms of assembly, the Tol-Pal system is composed of five core proteins: the inner membrane proteins TolA, TolQ and TolR, the periplasmic protein TolB and the outer membrane protein Pal. They form a network linking the inner and outer membranes and the peptidoglycan layer.

It is found in the periplasm. Part of the Tol-Pal system, which plays a role in outer membrane invagination during cell division and is important for maintaining outer membrane integrity. This Rickettsia peacockii (strain Rustic) protein is Tol-Pal system protein TolB.